Consider the following 155-residue polypeptide: RING finger protein 122 (155 aa).

A helical transmembrane segment spans residues 40–60 (VIFGTGIFVFMLSLIFCCYFI). The RING-type; atypical zinc finger occupies 93 to 134 (CAVCLEDFKGKDELGVLPCQHAFHRKCLVKWLEVRCVCPMCN).

Widely expressed in several tissues and cell lines.

It is found in the golgi apparatus. Its subcellular location is the endoplasmic reticulum. The protein resides in the membrane. Its function is as follows. May induce necrosis and apoptosis. May play a role in cell viability. The sequence is that of RING finger protein 122 (RNF122) from Homo sapiens (Human).